The following is an 80-amino-acid chain: uncharacterized protein (80 aa).

A helical transmembrane segment spans residues 10–29 (FVAREYPLVVVPFIYFVLFL).

The protein resides in the membrane. This is an uncharacterized protein from Saccharomyces cerevisiae (strain ATCC 204508 / S288c) (Baker's yeast).